Here is a 286-residue protein sequence, read N- to C-terminus: L-ribulose 3-epimerase (286 aa).

H12, S69, E152, and E158 together coordinate D-allulose. The D-fructose site is built by H12, S69, E152, and E158. E152 functions as the Proton donor/acceptor in the catalytic mechanism. E152 contributes to the Mn(2+) binding site. D185 serves as a coordination point for Mn(2+). H188, H211, R217, and E246 together coordinate D-allulose. Residues H188, H211, R217, and E246 each contribute to the D-fructose site. H211 is a binding site for Mn(2+). E246 acts as the Proton donor/acceptor in catalysis. E246 is a binding site for Mn(2+).

Belongs to the hyi family. In terms of assembly, homodimer. Mn(2+) is required as a cofactor.

The enzyme catalyses L-ribulose = L-xylulose. It carries out the reaction D-ribulose = D-xylulose. It catalyses the reaction D-allulose = keto-D-fructose. The catalysed reaction is keto-L-tagatose = keto-L-sorbose. The enzyme catalyses keto-D-tagatose = keto-D-sorbose. In terms of biological role, catalyzes the epimerization of various ketoses at the C(3) position. Exhibits the highest enzymatic activity toward L-ribulose, followed by D-ribulose, D-allulose and D-fructose. Shows lower activity with L-xylulose, L-tagatose, D-xylulose, D-tagatose, L-sorbose, D-sorbose, and weak activity with L-allulose and L-fructose. The chain is L-ribulose 3-epimerase from Methylomonas sp. (strain DH-1).